Reading from the N-terminus, the 274-residue chain is 3-methyl-2-oxobutanoate hydroxymethyltransferase (274 aa).

Mg(2+)-binding residues include Asp46 and Asp85. Residues 46-47, Asp85, and Lys115 each bind 3-methyl-2-oxobutanoate; that span reads DS. Glu117 serves as a coordination point for Mg(2+). Glu184 serves as the catalytic Proton acceptor.

Belongs to the PanB family. In terms of assembly, homodecamer; pentamer of dimers. It depends on Mg(2+) as a cofactor.

The protein localises to the cytoplasm. It carries out the reaction 3-methyl-2-oxobutanoate + (6R)-5,10-methylene-5,6,7,8-tetrahydrofolate + H2O = 2-dehydropantoate + (6S)-5,6,7,8-tetrahydrofolate. It functions in the pathway cofactor biosynthesis; (R)-pantothenate biosynthesis; (R)-pantoate from 3-methyl-2-oxobutanoate: step 1/2. In terms of biological role, catalyzes the reversible reaction in which hydroxymethyl group from 5,10-methylenetetrahydrofolate is transferred onto alpha-ketoisovalerate to form ketopantoate. This is 3-methyl-2-oxobutanoate hydroxymethyltransferase from Thermoanaerobacter pseudethanolicus (strain ATCC 33223 / 39E) (Clostridium thermohydrosulfuricum).